The primary structure comprises 613 residues: Transcription factor cbf11 (613 aa).

Positions 32–58 (NNGLHNQEDGAGGRNENSERVGSGSPG) are disordered.

Belongs to the Su(H) family.

It localises to the cytoplasm. Its subcellular location is the nucleus. Transcription factor that behaves as a negative regulator of adhesion. Recognizes specifically the canonical CSL response element GTGA/GGAA. May also play a cbf12-antagonistic role in the regulation of a number of other important processes such as extracellular material production, colony morphogenesis, ploidy maintenance, or meiosis. The polypeptide is Transcription factor cbf11 (cbf11) (Schizosaccharomyces pombe (strain 972 / ATCC 24843) (Fission yeast)).